The chain runs to 629 residues: MNTSDHPAPAAYDVIVVGGGHAGCEAAAAAARTGAITALVTHQAATIGEMSCNPAIGGIGKGHLVREIDALDGLMGRAIDQACIHFKMLNRSKGPAVRGPRAQADRKLYKKAVQDILHTTPHLSIIEGSVEDLITSSGTQQTVQGVILQDGRHLSASAVVLTTGTFLRGVIHCGEQRSEAGRVGEAPSIGLAKRLDALNLRMGRLKTGTPPRIDRRSIAWEDLPEDRGENPPTPFSTLNHHIDLPQISCRISETTADTHQIIRDNLHRSAVYGGMLSGKGPRYCPSIEDKVVRFPDKTRHQVFLEPEGLDDFTVYPNGISTSLPAEVQEALLHSMPGLHNAVIIRPGYAVEYDFVDPRSLRPSLELKELPGLFLAGQINGTTGYEEAGAQGLMAGLNAARKAQGLDSVTLDRSQAYIGVLIDDLTTHGVTEPYRMFTSRSEFRLTLRADNADRRLTRWGRQAGCVSDERWKTFAAYDQAMNDALTLAAQDTRTPVQLQQVGITVRQDGRRRPLLSLIGSDPEQDQKLNQAFPWLHDLDPRVREQLEIEGAYSGYLSRQDKERRVLQQEDTILLSDHIDYSAIGGLSAEIRDKLQSLRPTSLGAASRMEGMTPAALAAISHFVRRKQCFT.

FAD is bound by residues 18–23 (GGGHAG), Val-130, and Ser-188. Residue 280–294 (GPRYCPSIEDKVVRF) participates in NAD(+) binding. Gln-377 provides a ligand contact to FAD.

This sequence belongs to the MnmG family. In terms of assembly, homodimer. Heterotetramer of two MnmE and two MnmG subunits. The cofactor is FAD.

It localises to the cytoplasm. In terms of biological role, NAD-binding protein involved in the addition of a carboxymethylaminomethyl (cmnm) group at the wobble position (U34) of certain tRNAs, forming tRNA-cmnm(5)s(2)U34. The protein is tRNA uridine 5-carboxymethylaminomethyl modification enzyme MnmG of Granulibacter bethesdensis (strain ATCC BAA-1260 / CGDNIH1).